The sequence spans 206 residues: Cytidylate kinase (206 aa).

Position 9-17 (9-17 (GPAAAGKGT)) interacts with ATP. Residues 155-168 (LRERDRRDREREAA) are compositionally biased toward basic and acidic residues. Residues 155–174 (LRERDRRDREREAAPLRPAP) are disordered.

Belongs to the cytidylate kinase family. Type 1 subfamily.

It localises to the cytoplasm. The catalysed reaction is CMP + ATP = CDP + ADP. The enzyme catalyses dCMP + ATP = dCDP + ADP. The polypeptide is Cytidylate kinase (Cereibacter sphaeroides (strain KD131 / KCTC 12085) (Rhodobacter sphaeroides)).